The following is a 68-amino-acid chain: KCNQ1 downstream neighbor protein (68 aa).

The segment at 28-68 (GVASGCSPSKASQEARGKEKCPTLNGQPQWSALFTLPPQRE) is disordered.

As to expression, shows reduced expression in Wilms' tumor samples.

This Homo sapiens (Human) protein is KCNQ1 downstream neighbor protein (KCNQ1DN).